A 195-amino-acid polypeptide reads, in one-letter code: UMP-CMP kinase (195 aa).

17–22 (GSGKGT) contributes to the ATP binding site. The segment at 37-66 (SAGDLLRQEQQSGSKDGEMIATMIKNGEIV) is NMP. A ribonucleoside 5'-phosphate-binding positions include Arg-43, 64-66 (EIV), and 91-94 (GFPR). Residue Asn-98 coordinates CMP. Residues 131 to 141 (KRGESSGRSDD) are LID. Residue Arg-132 participates in ATP binding. A ribonucleoside 5'-phosphate-binding residues include Arg-138 and Arg-149. Arg-177 contacts ATP.

It belongs to the adenylate kinase family. UMP-CMP kinase subfamily. In terms of assembly, monomer. Mg(2+) serves as cofactor.

The protein localises to the cytoplasm. The protein resides in the nucleus. The enzyme catalyses CMP + ATP = CDP + ADP. It catalyses the reaction dCMP + ATP = dCDP + ADP. The catalysed reaction is UMP + ATP = UDP + ADP. Catalyzes the phosphorylation of pyrimidine nucleoside monophosphates at the expense of ATP. Plays an important role in de novo pyrimidine nucleotide biosynthesis. Has preference for UMP and CMP as phosphate acceptors. The protein is UMP-CMP kinase of Dictyostelium discoideum (Social amoeba).